A 184-amino-acid chain; its full sequence is Large ribosomal subunit protein eL13 (184 aa).

Positions 28 to 53 (PARKERRRQARKAKAQRIAPRPASGP) are disordered. A compositionally biased stretch (basic residues) spans 31–42 (KERRRQARKAKA).

The protein belongs to the eukaryotic ribosomal protein eL13 family.

This chain is Large ribosomal subunit protein eL13 (RPL13), found in Schistosoma mansoni (Blood fluke).